Reading from the N-terminus, the 175-residue chain is uncharacterized protein (175 aa).

Polar residues predominate over residues 1–10 (MSKKINNNKT). The interval 1 to 21 (MSKKINNNKTPRNKVKNNNVS) is disordered.

This is an uncharacterized protein from Ureaplasma parvum serovar 3 (strain ATCC 700970).